A 365-amino-acid polypeptide reads, in one-letter code: Aminomethyltransferase (365 aa).

It belongs to the GcvT family. The glycine cleavage system is composed of four proteins: P, T, L and H.

It carries out the reaction N(6)-[(R)-S(8)-aminomethyldihydrolipoyl]-L-lysyl-[protein] + (6S)-5,6,7,8-tetrahydrofolate = N(6)-[(R)-dihydrolipoyl]-L-lysyl-[protein] + (6R)-5,10-methylene-5,6,7,8-tetrahydrofolate + NH4(+). Functionally, the glycine cleavage system catalyzes the degradation of glycine. This Yersinia enterocolitica serotype O:8 / biotype 1B (strain NCTC 13174 / 8081) protein is Aminomethyltransferase.